Reading from the N-terminus, the 512-residue chain is Maturase K (512 aa).

It belongs to the intron maturase 2 family. MatK subfamily.

The protein localises to the plastid. Its subcellular location is the chloroplast. Functionally, usually encoded in the trnK tRNA gene intron. Probably assists in splicing its own and other chloroplast group II introns. The polypeptide is Maturase K (Soldanella alpina (Alpine snowbell)).